We begin with the raw amino-acid sequence, 337 residues long: MRRKTLKYLTFFLLFIFLTSFVLNYSNTGVPSAWFPKQMLLELSENFRRFIKSQPCTCRHCISQDKVSYWFDQRFNKTMQPLLTVHNALMEEDTYRWWLRLQRERKPNNLSDTVKELFRLVPGNVDPMLNKRLVGCRRCAVVGNSGNLKDSSYGPEIDSHDFVLRMNKAPTVGFEADVGSRTTHHLVYPESFRELGENVNMVLVPFKTTDLQWVISATTTGTITHTYVPVPPKIKVKQEKILIYHPAFIKYVFDNWLQGHGRYPSTGILSIIFSIHICDEVDLYGFGADSKGNWHHYWENNPSAGAFRKTGVHDGDFEYNITTTLAAINKIRIFKGR.

Over 1 to 4 (MRRK) the chain is Cytoplasmic. Residues 5-25 (TLKYLTFFLLFIFLTSFVLNY) form a helical; Signal-anchor for type II membrane protein membrane-spanning segment. Residues 26–337 (SNTGVPSAWF…INKIRIFKGR (312 aa)) lie on the Lumenal side of the membrane. 3 cysteine pairs are disulfide-bonded: C56–C61, C58–C136, and C139–C278. N76 carries N-linked (GlcNAc...) asparagine glycosylation. Q102 provides a ligand contact to substrate. N109 is a glycosylation site (N-linked (GlcNAc...) asparagine). The substrate site is built by N144, N167, Y227, Y263, G267, G287, H296, and H313. N-linked (GlcNAc...) asparagine glycosylation is present at N320.

The protein belongs to the glycosyltransferase 29 family. The soluble form derives from the membrane form by proteolytic processing. As to expression, highly expressed in submaxillary gland and to a much lesser extent in liver, lung, kidney, heart and brain.

It localises to the golgi apparatus. It is found in the golgi stack membrane. The protein localises to the trans-Golgi network membrane. Its subcellular location is the secreted. The catalysed reaction is a beta-D-galactosyl-(1-&gt;3)-N-acetyl-alpha-D-galactosaminyl derivative + CMP-N-acetyl-beta-neuraminate = an N-acetyl-alpha-neuraminyl-(2-&gt;3)-beta-D-galactosyl-(1-&gt;3)-N-acetyl-alpha-D-galactosaminyl derivative + CMP + H(+). It catalyses the reaction a ganglioside GM1 (d18:1(4E)) + CMP-N-acetyl-beta-neuraminate = a ganglioside GD1a (d18:1(4E)) + CMP + H(+). It carries out the reaction ganglioside GM1 (d18:1(4E)/18:0) + CMP-N-acetyl-beta-neuraminate = ganglioside GD1a (18:1(4E)/18:0) + CMP + H(+). The enzyme catalyses a ganglioside GA1 + CMP-N-acetyl-beta-neuraminate = a ganglioside GM1b + CMP + H(+). The catalysed reaction is a ganglioside GA1 (d18:1(4E)) + CMP-N-acetyl-beta-neuraminate = a ganglioside GM1b (d18:1(4E)) + CMP + H(+). It catalyses the reaction a ganglioside GD1b + CMP-N-acetyl-beta-neuraminate = a ganglioside GT1b + CMP + H(+). It carries out the reaction a 3-O-[beta-D-galactosyl-(1-&gt;3)-N-acetyl-alpha-D-galactosaminyl]-L-threonyl-[protein] + CMP-N-acetyl-beta-neuraminate = a 3-O-[N-acetyl-alpha-neuraminyl-(2-&gt;3)-beta-D-galactosyl-(1-&gt;3)-N-acetyl-alpha-D-galactosaminyl]-L-threonyl-[protein] + CMP + H(+). The enzyme catalyses a 3-O-[beta-D-galactosyl-(1-&gt;3)-N-acetyl-alpha-D-galactosaminyl]-L-seryl-[protein] + CMP-N-acetyl-beta-neuraminate = 3-O-[N-acetyl-alpha-neuraminyl-(2-&gt;3)-beta-D-galactosyl-(1-&gt;3)-N-acetyl-alpha-D-galactosaminyl]-L-seryl-[protein] + CMP + H(+). It functions in the pathway protein modification; protein glycosylation. The protein operates within glycolipid biosynthesis. In terms of biological role, a beta-galactoside alpha2-&gt;3 sialyltransferase involved in terminal sialylation of glycoproteins and glycolipids. Catalyzes the transfer of sialic acid (N-acetyl-neuraminic acid; Neu5Ac) from the nucleotide sugar donor CMP-Neu5Ac onto acceptor Galbeta-(1-&gt;3)-GalNAc-terminated glycoconjugates through an alpha2-3 linkage. Adds sialic acid to the core 1 O-glycan, Galbeta-(1-&gt;3)-GalNAc-O-Ser/Thr, which is a major structure of mucin-type O-glycans. As part of a homeostatic mechanism that regulates CD8-positive T cell numbers, sialylates core 1 O-glycans of T cell glycoproteins, SPN/CD43 and PTPRC/CD45. Prevents premature apoptosis of thymic CD8-positive T cells prior to peripheral emigration, whereas in the secondary lymphoid organs controls the survival of CD8-positive memory T cells generated following a successful immune response. Transfers sialic acid to asialofetuin, presumably onto Galbeta-(1-&gt;3)-GalNAc-O-Ser. Sialylates GM1a, GA1 and GD1b gangliosides to form GD1a, GM1b and GT1b, respectively. In Mus musculus (Mouse), this protein is CMP-N-acetylneuraminate-beta-galactosamide-alpha-2,3-sialyltransferase 1 (St3gal1).